The primary structure comprises 847 residues: MERPFGCFFILLLISYTVVATFDDEPSFPENADLTKDLEQKCFSINKVDPNLKFENDRLKRAYIALQAWKKAIYSDPFKTTANWVGSDVCSYNGVYCAPALDDDSLTVVAGVDLNHADIAGHLPPELGLMTDLALFHINSNRFCGIIPKSLSKLALMYEFDVSNNRFVGQFPEVSLSWPSLKFLDLRYNEFEGSLPSEIFDKDLDAIFLNNNRFESVIPGTIGKSKASVVTFANNKFSGCIPKSIGNMKNLNEIVFTGNNLTGCFPNEIGLLNNVTVFDASKNGFVGSLPSTLSGLASVEQLDLSHNKLTGFVVDKFCKLPNLDSFKFSYNFFNGEAESCVPGRNNGKQFDDTNNCLQNRPSQKPAKQCLPVVSRPVDCSKDKCSGGSNGGSSPSPNPPRTSEPKPSKPEPVMPKPSDSSKPETPKTPEQPSPKPQPPKHESPKPEEPENKHELPKQKESPKPQPSKPEDSPKPEQPKPEESPKPEQPQIPEPTKPVSPPNEAQGPTPDDPYDASPVKNRRSPPPPKVEDTRVPPPQPPMPSPSPPSPIYSPPPPVHSPPPPVYSSPPPPHVYSPPPPVASPPPPSPPPPVHSPPPPPVFSPPPPVFSPPPPSPVYSPPPPSHSPPPPVYSPPPPTFSPPPTHNTNQPPMGAPTPTQAPTPSSETTQVPTPSSESDQSQILSPVQAPTPVQSSTPSSEPTQVPTPSSSESYQAPNLSPVQAPTPVQAPTTSSETSQVPTPSSESNQSPSQAPTPILEPVHAPTPNSKPVQSPTPSSEPVSSPEQSEEVEAPEPTPVNPSSVPSSSPSTDTSIPPPENNDDDDDGDFVLPPHIGFQYASPPPPMFQGY.

The N-terminal stretch at 1–20 (MERPFGCFFILLLISYTVVA) is a signal peptide. 8 LRR repeats span residues 45–71 (INKVDPNLKFENDRLKRAYIALQAWKK), 106–130 (LTVVAGVDLNHADIAGHLPPELGLM), 131–153 (TDLALFHINSNRFCGIIPKSLSK), 155–178 (ALMYEFDVSNNRFVGQFPEVSLSW), 179–202 (PSLKFLDLRYNEFEGSLPSEIFDK), 204–224 (LDAIFLNNNRFESVIPGTIGK), 226–248 (KASVVTFANNKFSGCIPKSIGNM), and 249–273 (KNLNEIVFTGNNLTGCFPNEIGLLN). Residues asparagine 260 and asparagine 274 are each glycosylated (N-linked (GlcNAc...) asparagine). LRR repeat units lie at residues 296–319 (LASVEQLDLSHNKLTGFVVDKFCK) and 321–343 (PNLDSFKFSYNFFNGEAESCVPG). A disordered region spans residues 381-847 (KDKCSGGSNG…SPPPPMFQGY (467 aa)). Basic and acidic residues predominate over residues 438-484 (PKHESPKPEEPENKHELPKQKESPKPQPSKPEDSPKPEQPKPEESPK). 2 stretches are compositionally biased toward pro residues: residues 485 to 499 (PEQPQIPEPTKPVSP) and 533 to 642 (VPPP…PPPT). The interval 522–847 (SPPPPKVEDT…SPPPPMFQGY (326 aa)) is contains the Ser-Pro(4) repeats. 3 stretches are compositionally biased toward polar residues: residues 667 to 682 (QVPTPSSESDQSQILS), 688 to 720 (TPVQSSTPSSEPTQVPTPSSSESYQAPNLSPVQ), and 726 to 752 (QAPTTSSETSQVPTPSSESNQSPSQAP). Low complexity-rich tracts occupy residues 768-783 (PVQSPTPSSEPVSSPE) and 797-811 (NPSSVPSSSPSTDTS). The span at 838–847 (SPPPPMFQGY) shows a compositional bias: pro residues.

Hydroxylated on proline residues in the S-P-P-P-P repeat. In terms of processing, O-glycosylated on hydroxyprolines. In terms of tissue distribution, expressed in flowers, stamen, pollen, and pollinated carpels (at protein level).

The protein localises to the secreted. Its subcellular location is the cell wall. In terms of biological role, modulates cell morphogenesis by regulating cell wall formation and assembly, and/or growth polarization. The protein is Pollen-specific leucine-rich repeat extensin-like protein 2 (PEX2) of Arabidopsis thaliana (Mouse-ear cress).